We begin with the raw amino-acid sequence, 404 residues long: Keratin, type I cuticular Ha3-I (404 aa).

Residues 1-56 are head; sequence MPYNCCLPAMSCRTSCSSRPCVPPSCHGCTLPGACNIPANVGNCNWFCEGSFNGNE. The IF rod domain occupies 56–367; that stretch reads EKETMQFLND…GLLESEDCKL (312 aa). Positions 57-91 are coil 1A; sequence KETMQFLNDRLASYMEKVRQLERENAELECRIQER. The tract at residues 92-102 is linker 1; it reads NQQQDPLVCPA. Residues 103–203 are coil 1B; it reads YQAYFRTIEE…HEQEVNTLRC (101 aa). A linker 12 region spans residues 204 to 219; the sequence is QLGDRLNVEVDAAPTV. A coil 2 region spans residues 220 to 363; that stretch reads DLNRVLNETR…NTYRGLLESE (144 aa). Positions 364 to 404 are tail; it reads DCKLPCNPCATTNACDKPIGPCVPNPCVTRPRCGPCNTFVR.

It belongs to the intermediate filament family.

This is Keratin, type I cuticular Ha3-I from Mus musculus (Mouse).